We begin with the raw amino-acid sequence, 605 residues long: Phosphoenolpyruvate carboxykinase [GTP] (605 aa).

Substrate contacts are provided by residues Arg79 and 218–220 (YGG). Mn(2+)-binding residues include Lys227 and His247. Ser269 serves as a coordination point for substrate. 270–275 (ACGKTN) contributes to the GTP binding site. Cys271 is a catalytic residue. Asp294 is a Mn(2+) binding site. Residues 364–381 (LTDWKGRDWTPQSDEKAA) are compositionally biased toward basic and acidic residues. Residues 364 to 385 (LTDWKGRDWTPQSDEKAAHPNS) form a disordered region. 384–386 (NSR) serves as a coordination point for substrate. GTP contacts are provided by residues Arg386, Arg417, and 513–516 (FGEN).

Belongs to the phosphoenolpyruvate carboxykinase [GTP] family. As to quaternary structure, monomer. The cofactor is Mn(2+).

Its subcellular location is the cytoplasm. The catalysed reaction is oxaloacetate + GTP = phosphoenolpyruvate + GDP + CO2. The protein operates within carbohydrate biosynthesis; gluconeogenesis. Catalyzes the conversion of oxaloacetate (OAA) to phosphoenolpyruvate (PEP), the rate-limiting step in the metabolic pathway that produces glucose from lactate and other precursors derived from the citric acid cycle. In Saccharopolyspora erythraea (strain ATCC 11635 / DSM 40517 / JCM 4748 / NBRC 13426 / NCIMB 8594 / NRRL 2338), this protein is Phosphoenolpyruvate carboxykinase [GTP].